The chain runs to 341 residues: Uroporphyrinogen decarboxylase (341 aa).

Residues 23 to 27, Asp73, Tyr148, Ser203, and His318 contribute to the substrate site; that span reads RQAGR.

The protein belongs to the uroporphyrinogen decarboxylase family. As to quaternary structure, homodimer.

The protein resides in the cytoplasm. The enzyme catalyses uroporphyrinogen III + 4 H(+) = coproporphyrinogen III + 4 CO2. The protein operates within porphyrin-containing compound metabolism; protoporphyrin-IX biosynthesis; coproporphyrinogen-III from 5-aminolevulinate: step 4/4. In terms of biological role, catalyzes the decarboxylation of four acetate groups of uroporphyrinogen-III to yield coproporphyrinogen-III. The protein is Uroporphyrinogen decarboxylase of Brucella anthropi (strain ATCC 49188 / DSM 6882 / CCUG 24695 / JCM 21032 / LMG 3331 / NBRC 15819 / NCTC 12168 / Alc 37) (Ochrobactrum anthropi).